We begin with the raw amino-acid sequence, 167 residues long: Small ribosomal subunit protein uS5 (167 aa).

Positions 11-74 (LQEKLIAVNR…EKARRAMINV (64 aa)) constitute an S5 DRBM domain.

The protein belongs to the universal ribosomal protein uS5 family. In terms of assembly, part of the 30S ribosomal subunit. Contacts proteins S4 and S8.

Functionally, with S4 and S12 plays an important role in translational accuracy. Located at the back of the 30S subunit body where it stabilizes the conformation of the head with respect to the body. This chain is Small ribosomal subunit protein uS5, found in Yersinia pseudotuberculosis serotype O:1b (strain IP 31758).